A 351-amino-acid chain; its full sequence is Transaldolase (351 aa).

The active-site Schiff-base intermediate with substrate is Lys138.

It belongs to the transaldolase family. Type 2 subfamily.

It is found in the cytoplasm. The catalysed reaction is D-sedoheptulose 7-phosphate + D-glyceraldehyde 3-phosphate = D-erythrose 4-phosphate + beta-D-fructose 6-phosphate. It participates in carbohydrate degradation; pentose phosphate pathway; D-glyceraldehyde 3-phosphate and beta-D-fructose 6-phosphate from D-ribose 5-phosphate and D-xylulose 5-phosphate (non-oxidative stage): step 2/3. Its function is as follows. Transaldolase is important for the balance of metabolites in the pentose-phosphate pathway. This is Transaldolase from Neisseria meningitidis serogroup C / serotype 2a (strain ATCC 700532 / DSM 15464 / FAM18).